The following is a 221-amino-acid chain: Phosphoribosylformylglycinamidine synthase subunit PurQ (221 aa).

The 220-residue stretch at 2-221 folds into the Glutamine amidotransferase type-1 domain; the sequence is NVGVIVFPGS…FAGLLEPVAA (220 aa). Cys-86 serves as the catalytic Nucleophile. Residues His-194 and Glu-196 contribute to the active site.

As to quaternary structure, part of the FGAM synthase complex composed of 1 PurL, 1 PurQ and 2 PurS subunits.

It is found in the cytoplasm. The enzyme catalyses N(2)-formyl-N(1)-(5-phospho-beta-D-ribosyl)glycinamide + L-glutamine + ATP + H2O = 2-formamido-N(1)-(5-O-phospho-beta-D-ribosyl)acetamidine + L-glutamate + ADP + phosphate + H(+). It carries out the reaction L-glutamine + H2O = L-glutamate + NH4(+). Its pathway is purine metabolism; IMP biosynthesis via de novo pathway; 5-amino-1-(5-phospho-D-ribosyl)imidazole from N(2)-formyl-N(1)-(5-phospho-D-ribosyl)glycinamide: step 1/2. Its function is as follows. Part of the phosphoribosylformylglycinamidine synthase complex involved in the purines biosynthetic pathway. Catalyzes the ATP-dependent conversion of formylglycinamide ribonucleotide (FGAR) and glutamine to yield formylglycinamidine ribonucleotide (FGAM) and glutamate. The FGAM synthase complex is composed of three subunits. PurQ produces an ammonia molecule by converting glutamine to glutamate. PurL transfers the ammonia molecule to FGAR to form FGAM in an ATP-dependent manner. PurS interacts with PurQ and PurL and is thought to assist in the transfer of the ammonia molecule from PurQ to PurL. This is Phosphoribosylformylglycinamidine synthase subunit PurQ from Synechococcus sp. (strain ATCC 27144 / PCC 6301 / SAUG 1402/1) (Anacystis nidulans).